The sequence spans 1161 residues: Auxin response factor 19 (1161 aa).

The interval 1 to 20 (MMKQAQQQPPPPPASSAATT) is disordered. Positions 154 to 256 (FCKTLTASDT…QLLLGIRRAN (103 aa)) form a DNA-binding region, TF-B3. Residues 573-598 (NQMQQQHASSTQGQQPATSQPLLLPQ) are disordered. The PB1 domain occupies 1027 to 1111 (RTFTKVYKRG…KCIRILSPQE (85 aa)).

This sequence belongs to the ARF family. As to quaternary structure, homodimers and heterodimers. Expressed in roots, culms, leaves and young panicles.

It is found in the nucleus. In terms of biological role, auxin response factors (ARFs) are transcriptional factors that bind specifically to the DNA sequence 5'-TGTCTC-3' found in the auxin-responsive promoter elements (AuxREs). The polypeptide is Auxin response factor 19 (ARF19) (Oryza sativa subsp. japonica (Rice)).